The following is a 189-amino-acid chain: Recombination protein RecR (189 aa).

The segment at 48–63 (CQTCFHLSAEPLCDIC) adopts a C4-type zinc-finger fold. Positions 71 to 165 (QLLCVVADSR…QVSRIAYGLP (95 aa)) constitute a Toprim domain.

It belongs to the RecR family.

May play a role in DNA repair. It seems to be involved in an RecBC-independent recombinational process of DNA repair. It may act with RecF and RecO. The chain is Recombination protein RecR from Prochlorococcus marinus (strain MIT 9313).